The primary structure comprises 144 residues: Large ribosomal subunit protein uL15 (144 aa).

The segment at 1–57 is disordered; sequence MRLNTLSPAPGSKPSAKRVGRGIGSGLGKTCGRGHKGQKSRSGGSVRPGFEGGQMPL. The span at 21 to 31 shows a compositional bias: gly residues; that stretch reads RGIGSGLGKTC.

The protein belongs to the universal ribosomal protein uL15 family. In terms of assembly, part of the 50S ribosomal subunit.

Functionally, binds to the 23S rRNA. The protein is Large ribosomal subunit protein uL15 of Photobacterium profundum (strain SS9).